A 336-amino-acid polypeptide reads, in one-letter code: HTH-type transcriptional repressor PurR (336 aa).

An HTH lacI-type domain is found at 2 to 56 (ATIKDVAKLAGVSTTTVSHVINKTRFVAEDTSKAVWDAIQQLNYSPSAVARSLKV). Positions 4 to 23 (IKDVAKLAGVSTTTVSHVIN) form a DNA-binding region, H-T-H motif. A DNA-binding region spans residues 48 to 56 (SAVARSLKV). Hypoxanthine-binding residues include Y73, K188, F219, and D273.

Homodimer.

It participates in purine metabolism; purine nucleotide biosynthesis [regulation]. In terms of biological role, is the main repressor of the genes involved in the de novo synthesis of purine nucleotides, regulating purB, purC, purEK, purF, purHD, purL, purMN and guaBA expression. PurR is allosterically activated to bind its cognate DNA by binding the purine corepressors, hypoxanthine or guanine, thereby effecting transcription repression. This is HTH-type transcriptional repressor PurR from Actinobacillus pleuropneumoniae serotype 5b (strain L20).